Here is a 325-residue protein sequence, read N- to C-terminus: DNA-directed RNA polymerase subunit alpha (325 aa).

Residues 1 to 231 (MQTSLLKPKI…DQLSVFAALE (231 aa)) form an alpha N-terminal domain (alpha-NTD) region. Residues 246–325 (IDPILLRPVD…ENWPPAGLDK (80 aa)) form an alpha C-terminal domain (alpha-CTD) region.

It belongs to the RNA polymerase alpha chain family. As to quaternary structure, homodimer. The RNAP catalytic core consists of 2 alpha, 1 beta, 1 beta' and 1 omega subunit. When a sigma factor is associated with the core the holoenzyme is formed, which can initiate transcription.

The catalysed reaction is RNA(n) + a ribonucleoside 5'-triphosphate = RNA(n+1) + diphosphate. In terms of biological role, DNA-dependent RNA polymerase catalyzes the transcription of DNA into RNA using the four ribonucleoside triphosphates as substrates. The sequence is that of DNA-directed RNA polymerase subunit alpha from Burkholderia orbicola (strain MC0-3).